We begin with the raw amino-acid sequence, 159 residues long: MRTGVRLAVDPGAARIGVARSDPDGILAIPVETIRRGPGDLDRIAALVLEYEAREVIVGYPASLSGAEGRAARAARAFAKALARRLAPVPVRLVDERLTTVTAELHLRTGASYRKRGARGGRARRSVIDQAAATVLLQNALDTERRTKLPPGELVEGTP.

Belongs to the YqgF nuclease family.

The protein resides in the cytoplasm. In terms of biological role, could be a nuclease involved in processing of the 5'-end of pre-16S rRNA. The polypeptide is Putative pre-16S rRNA nuclease (Thermobifida fusca (strain YX)).